The primary structure comprises 284 residues: Probable ADP-ribose 1''-phosphate phosphatase YML087W (284 aa).

4 residues coordinate substrate: D23, Q55, N80, and D90. The Macro domain maps to 34 to 230; that stretch reads ESIPHAYIQN…HISKELKNVL (197 aa). Residues N80 and D90 contribute to the active site. A disulfide bridge connects residues C128 and C136. H145 is an active-site residue. Residues T148 and T195 each contribute to the substrate site.

In terms of assembly, homodimer.

It catalyses the reaction ADP-alpha-D-ribose 1''-phosphate + H2O = ADP-D-ribose + phosphate. Highly specific phosphatase involved in the metabolism of ADP-ribose 1''-phosphate (Appr1p) which is produced as a consequence of tRNA splicing. + phosphate. The protein is Probable ADP-ribose 1''-phosphate phosphatase YML087W of Saccharomyces cerevisiae (strain ATCC 204508 / S288c) (Baker's yeast).